We begin with the raw amino-acid sequence, 176 residues long: Myelin basic protein (176 aa).

The span at Met1–Gly11 shows a compositional bias: basic residues. A disordered region spans residues Met1–Arg176. Position 2 is an N-acetylalanine (Ala2). Ser7 bears the Phosphoserine mark. Citrulline is present on residues Arg25 and Arg33. Ser58 is subject to Phosphoserine. The residue at position 97 (Asn97) is a Deamidated asparagine. Thr103 is modified (phosphothreonine). A Deamidated glutamine modification is found at Gln108. Arg111 carries the symmetric dimethylarginine modification. Ser117 carries the post-translational modification Phosphoserine. A compositionally biased stretch (basic and acidic residues) spans Ser134–His153. Positions Arg166–Arg176 are enriched in polar residues. 2 positions are modified to phosphoserine: Ser167 and Ser171. The residue at position 176 (Arg176) is a Citrulline.

This sequence belongs to the myelin basic protein family. As to quaternary structure, homodimer. Post-translationally, as in other animals, several charge isomers may be produced as a result of optional post-translational modifications, such as phosphorylation of serine or threonine residues, deamidation of glutamine or asparagine residues, citrullination and methylation of arginine residues.

It is found in the myelin membrane. Functionally, is, with PLP, the most abundant protein component of the myelin membrane in the CNS. Plays a role in both the formation and stabilization of this compact multilayer arrangement of bilayers. Each splice variant and charge isomer may have a specialized function in the assembly of an optimized, biochemically functional myelin membrane. The chain is Myelin basic protein (mbp) from Xenopus laevis (African clawed frog).